We begin with the raw amino-acid sequence, 338 residues long: Glycerol-3-phosphate dehydrogenase [NAD(P)+] (338 aa).

5 residues coordinate NADPH: Ser-11, Trp-12, His-32, His-33, and Lys-109. Sn-glycerol 3-phosphate contacts are provided by Lys-109, Gly-140, and Ser-142. Residue Ala-144 participates in NADPH binding. The sn-glycerol 3-phosphate site is built by Lys-195, Asp-248, Ser-258, Arg-259, and Asn-260. Catalysis depends on Lys-195, which acts as the Proton acceptor. NADPH is bound at residue Arg-259. The NADPH site is built by Val-283 and Glu-285.

Belongs to the NAD-dependent glycerol-3-phosphate dehydrogenase family.

The protein localises to the cytoplasm. The catalysed reaction is sn-glycerol 3-phosphate + NAD(+) = dihydroxyacetone phosphate + NADH + H(+). It carries out the reaction sn-glycerol 3-phosphate + NADP(+) = dihydroxyacetone phosphate + NADPH + H(+). The protein operates within membrane lipid metabolism; glycerophospholipid metabolism. In terms of biological role, catalyzes the reduction of the glycolytic intermediate dihydroxyacetone phosphate (DHAP) to sn-glycerol 3-phosphate (G3P), the key precursor for phospholipid synthesis. The chain is Glycerol-3-phosphate dehydrogenase [NAD(P)+] from Leuconostoc citreum (strain KM20).